The sequence spans 410 residues: Monoglucosyldiacylglycerol epimerase (410 aa).

The first 14 residues, 1–14 (MAMAWLMGLGLALA), serve as a signal peptide directing secretion. The next 2 helical transmembrane spans lie at 71–91 (ALVM…WQGF) and 96–116 (LILA…SAIA). Tyrosine 320 serves as the catalytic Proton acceptor. The helical transmembrane segment at 380–400 (IIVTINPITFIAFPVKEFFVS) threads the bilayer.

This sequence belongs to the short-chain dehydrogenases/reductases (SDR) family.

It localises to the membrane. It catalyses the reaction a 1,2-diacyl-3-O-(beta-D-glucopyranosyl)-sn-glycerol = a 1,2-diacyl-3-O-(beta-D-galactosyl)-sn-glycerol. Its function is as follows. Involved in the biosynthesis of galactolipids found in the photosynthetic membranes. Catalyzes the isomerization of monoglucosyldiacylglycerol (GlcDG) to yield monogalactosyldiacylglycerol (MGDG). This Synechocystis sp. (strain ATCC 27184 / PCC 6803 / Kazusa) protein is Monoglucosyldiacylglycerol epimerase.